Reading from the N-terminus, the 187-residue chain is Hypoxanthine/guanine phosphoribosyltransferase (187 aa).

It belongs to the purine/pyrimidine phosphoribosyltransferase family. Archaeal HPRT subfamily. Homodimer.

The protein localises to the cytoplasm. It carries out the reaction IMP + diphosphate = hypoxanthine + 5-phospho-alpha-D-ribose 1-diphosphate. It catalyses the reaction GMP + diphosphate = guanine + 5-phospho-alpha-D-ribose 1-diphosphate. The protein operates within purine metabolism; IMP biosynthesis via salvage pathway; IMP from hypoxanthine: step 1/1. Functionally, catalyzes a salvage reaction resulting in the formation of IMP that is energically less costly than de novo synthesis. This chain is Hypoxanthine/guanine phosphoribosyltransferase, found in Methanocorpusculum labreanum (strain ATCC 43576 / DSM 4855 / Z).